Here is a 514-residue protein sequence, read N- to C-terminus: Sugar transport protein 10 (514 aa).

At methionine 1–glutamate 18 the chain is on the cytoplasmic side. 10 helical membrane-spanning segments follow: residues glycine 19–phenylalanine 39, leucine 86–threonine 106, valine 113–valine 133, valine 135–serine 155, glycine 170–isoleucine 190, valine 204–proline 224, leucine 285–phenylalanine 305, alanine 320–isoleucine 340, leucine 350–isoleucine 370, and tryptophan 389–glycine 409. Residues cysteine 77 and cysteine 449 are joined by a disulfide bond. Beta-D-glucose is bound at residue glutamine 177. Glutamine 295, glutamine 296, asparagine 301, and asparagine 332 together coordinate beta-D-glucose. Tryptophan 410 provides a ligand contact to beta-D-glucose. A run of 2 helical transmembrane segments spans residues isoleucine 428–leucine 448 and phenylalanine 453–leucine 473. Topologically, residues leucine 474–asparagine 514 are cytoplasmic.

This sequence belongs to the major facilitator superfamily. Sugar transporter (TC 2.A.1.1) family. In terms of tissue distribution, expressed in primordia of lateral roots, pollinated stigmata, and pollen tubes.

The protein localises to the membrane. The catalysed reaction is D-glucose(out) + H(+)(out) = D-glucose(in) + H(+)(in). The enzyme catalyses D-mannose(out) + H(+)(out) = D-mannose(in) + H(+)(in). It carries out the reaction D-galactose(in) + H(+)(in) = D-galactose(out) + H(+)(out). Functionally, hexose-H(+) symporter that catalyzes the high-affinity uptake of glucose, galactose and mannose. Proton-coupled symporter responsible for the uptake of glucose from the apoplast into the cells. This Arabidopsis thaliana (Mouse-ear cress) protein is Sugar transport protein 10.